The primary structure comprises 188 residues: Elongation factor P (188 aa).

It belongs to the elongation factor P family.

Its subcellular location is the cytoplasm. It participates in protein biosynthesis; polypeptide chain elongation. Involved in peptide bond synthesis. Stimulates efficient translation and peptide-bond synthesis on native or reconstituted 70S ribosomes in vitro. Probably functions indirectly by altering the affinity of the ribosome for aminoacyl-tRNA, thus increasing their reactivity as acceptors for peptidyl transferase. The sequence is that of Elongation factor P from Bdellovibrio bacteriovorus (strain ATCC 15356 / DSM 50701 / NCIMB 9529 / HD100).